The chain runs to 1212 residues: Peregrin (1212 aa).

The C2H2-type zinc-finger motif lies at 21-47 (YECPVETCRKVYKSYSGIEYHLYHYDH). 2 disordered regions span residues 43–87 (YHYD…SPGR) and 118–176 (VVSE…PKLP). The segment covering 58-67 (LRKHKKKGRQ) has biased composition (basic residues). An interaction with KAT6A and KAT6B region spans residues 59 to 221 (RKHKKKGRQS…VEYDMDEEDY (163 aa)). Low complexity predominate over residues 74 to 85 (QSPSPSEVSQSP). Residues 119-130 (VSEDEEAPEEAP) are compositionally biased toward acidic residues. Ser120 is modified (phosphoserine). Residue Lys147 is modified to N6-acetyllysine. Positions 148 to 166 (SGKHKNKEKRKDSNHHHHS) are enriched in basic residues. Ser237 carries the post-translational modification Phosphoserine. A PHD-type 1 zinc finger spans residues 272-322 (DAVCCICNDGECQNSNVILFCDMCNLAVHQECYGVPYIPEGQWLCRRCLQS). The C2HC pre-PHD-type zinc-finger motif lies at 326 to 359 (AVDCALCPNKGGAFKQTDDGRWAHVVCALWIPEV). The segment at 383 to 447 (LTCYICKQRG…RKTAYCDIHT (65 aa)) adopts a PHD-type 2 zinc-finger fold. The interval 447–489 (TPPGSARRLPALSHSEGEEEEDEEEDEGKSWSSEKVKKAKAKS) is disordered. Ser459 and Ser461 each carry phosphoserine. Positions 463–473 (GEEEEDEEEDE) are enriched in acidic residues. The interaction with MEAF6 and ING5 stretch occupies residues 500 to 819 (LAEKRAAAPV…IKKEMTALRR (320 aa)). Residues 542–1077 (YWTLKRQSRN…RGAGWLSEDE (536 aa)) form a required for RUNX1 and RUNX2 transcriptional activation region. Residue Lys579 is modified to N6-acetyllysine. The 105-residue stretch at 627-731 (MQLTPFLILL…EQGGAVLRQA (105 aa)) folds into the Bromo domain. Residues 817–1060 (LRRKLAHQRE…VGTGRGVGHS (244 aa)) are disordered. Residues 823–836 (HQRETGRDGPERHG) are compositionally biased toward basic and acidic residues. Thr856 carries the post-translational modification Phosphothreonine. Residues 856–869 (TDSAAEESSSQETS) are compositionally biased toward low complexity. Ser858, Ser915, Ser920, and Ser924 each carry phosphoserine. Residues 993–1019 (PRSSSDSESSSSSSSSAASDRTSTTPS) show a composition bias toward low complexity. At Ser1074 the chain carries Phosphoserine. A PWWP domain is found at 1083–1166 (ALDLVWAKCR…RTKLVPLGVN (84 aa)). Phosphoserine is present on Ser1185.

As to quaternary structure, component of some HBO1 complex composed of KAT7/HBO1, MEAF6, ING5, and BRPF1. Component of the MOZ/MORF complex composed at least of ING5, KAT6A, KAT6B, MEAF6 and one of BRPF1, BRD1/BRPF2 and BRPF3. Interacts (via PHD-type zinc finger domains) with unmethylated histone H3 at 'Lys-4' (H3K4me0). Interacts with trimethylated 'Lys-36' of histone H3 (H3K36me3). Interacts with ING5; interaction directs BRPF1 to H4K4me3-enriched chromatin at the 5' of active genes. Interacts with KAT7. Post-translationally, acetylated by KAT6A. Expressed at low level in most tissues, with high expression in the testis and specific regions of the brain.

It is found in the nucleus. Its subcellular location is the chromosome. It localises to the cytoplasm. In terms of biological role, scaffold subunit of various histone acetyltransferase (HAT) complexes, such as the MOZ/MORF and HBO1 complexes, which have a histone H3 acetyltransferase activity. Plays a key role in HBO1 complex by directing KAT7/HBO1 specificity towards histone H3 'Lys-14' acetylation (H3K14ac). Some HAT complexes preferentially mediate histone H3 'Lys-23' (H3K23ac) acetylation. Positively regulates the transcription of RUNX1 and RUNX2. This is Peregrin from Mus musculus (Mouse).